The sequence spans 689 residues: DNA ligase (689 aa).

Residues 40 to 44 (DAEYD), 89 to 90 (SL), and Glu-121 contribute to the NAD(+) site. Lys-123 functions as the N6-AMP-lysine intermediate in the catalytic mechanism. 4 residues coordinate NAD(+): Arg-144, Glu-179, Lys-295, and Lys-319. 4 residues coordinate Zn(2+): Cys-413, Cys-416, Cys-431, and Cys-437. Residues 610–689 (RAQSSLTGKI…EEWLTLIKNA (80 aa)) form the BRCT domain.

The protein belongs to the NAD-dependent DNA ligase family. LigA subfamily. Requires Mg(2+) as cofactor. Mn(2+) is required as a cofactor.

The enzyme catalyses NAD(+) + (deoxyribonucleotide)n-3'-hydroxyl + 5'-phospho-(deoxyribonucleotide)m = (deoxyribonucleotide)n+m + AMP + beta-nicotinamide D-nucleotide.. Functionally, DNA ligase that catalyzes the formation of phosphodiester linkages between 5'-phosphoryl and 3'-hydroxyl groups in double-stranded DNA using NAD as a coenzyme and as the energy source for the reaction. It is essential for DNA replication and repair of damaged DNA. This is DNA ligase from Rickettsia akari (strain Hartford).